A 318-amino-acid chain; its full sequence is Formimidoylglutamase (318 aa).

Mn(2+) contacts are provided by histidine 130, aspartate 155, histidine 157, aspartate 159, aspartate 246, and aspartate 248.

It belongs to the arginase family. The cofactor is Mn(2+).

It catalyses the reaction N-formimidoyl-L-glutamate + H2O = formamide + L-glutamate. It functions in the pathway amino-acid degradation; L-histidine degradation into L-glutamate; L-glutamate from N-formimidoyl-L-glutamate (hydrolase route): step 1/1. Functionally, catalyzes the conversion of N-formimidoyl-L-glutamate to L-glutamate and formamide. This Klebsiella pneumoniae subsp. pneumoniae (strain ATCC 700721 / MGH 78578) protein is Formimidoylglutamase.